We begin with the raw amino-acid sequence, 300 residues long: MELNRLVTEGRLQESLEIDQVSTLEMVRIINEQDKQVALAVEKELPHIARAVDLIAERLRAGGRLFYVGAGTSGRLGILDASEIPPTYGAPPDLVQGVIAGGLEAVFRTREGAEDSREQGAADIAARVRPGDVVVGIAASGRTPYTVAALEEARRLGCATVAVTNNPDSALAAAADVAIAPVVGPEVIMGSTRMKAGTAQKMVLNMLSTGAMIRLGKVYSNLMVDMQASNEKLRHRAVRMVVQATGRDEDAAARALEEAGGSVKQAIVALLAGVDARTAREALDRAGGYVREAIRLAQGK.

The region spanning 55–217 (IAERLRAGGR…STGAMIRLGK (163 aa)) is the SIS domain. Glu-83 serves as the catalytic Proton donor. Residue Glu-114 is part of the active site.

This sequence belongs to the GCKR-like family. MurNAc-6-P etherase subfamily. As to quaternary structure, homodimer.

The catalysed reaction is N-acetyl-D-muramate 6-phosphate + H2O = N-acetyl-D-glucosamine 6-phosphate + (R)-lactate. It functions in the pathway amino-sugar metabolism; N-acetylmuramate degradation. Functionally, specifically catalyzes the cleavage of the D-lactyl ether substituent of MurNAc 6-phosphate, producing GlcNAc 6-phosphate and D-lactate. The chain is N-acetylmuramic acid 6-phosphate etherase from Symbiobacterium thermophilum (strain DSM 24528 / JCM 14929 / IAM 14863 / T).